Here is a 218-residue protein sequence, read N- to C-terminus: Probable carboxylesterase clz11 (218 aa).

The Involved in the stabilization of the negatively charged intermediate by the formation of the oxyanion hole signature appears at 7-9; that stretch reads LVG. Serine 77 is a catalytic residue.

It belongs to the 'GDXG' lipolytic enzyme family.

The enzyme catalyses a carboxylic ester + H2O = an alcohol + a carboxylate + H(+). It participates in secondary metabolite biosynthesis. In terms of biological role, probable carboxylesterase; part of the gene cluster that mediates the biosynthesis of squalestatin S1 (SQS1, also known as zaragozic acid A), a heavily oxidized fungal polyketide that offers potent cholesterol lowering activity by targeting squalene synthase (SS). SQS1 is composed of a 2,8-dioxobicyclic[3.2.1]octane-3,4,5-tricarboxyclic acid core that is connected to two lipophilic polyketide arms. These initial steps feature the priming of an unusual benzoic acid starter unit onto the highly reducing polyketide synthase clz14, followed by oxaloacetate extension and product release to generate a tricarboxylic acid containing product. The phenylalanine ammonia lyase (PAL) clz10 and the acyl-CoA ligase clz12 are involved in transforming phenylalanine into benzoyl-CoA. The citrate synthase-like protein clz17 is involved in connecting the C-alpha-carbons of the hexaketide chain and oxaloacetate to afford the tricarboxylic acid unit. The potential hydrolytic enzymes, clz11 and clz13, are in close proximity to pks2 and may participate in product release. On the other side, the tetraketide arm is synthesized by a the squalestatin tetraketide synthase clz2 and enzymatically esterified to the core in the last biosynthetic step, by the acetyltransferase clz6. The biosynthesis of the tetraketide must involve 3 rounds of chain extension. After the first and second rounds methyl-transfer occurs, and in all rounds of extension the ketoreductase and dehydratase are active. The enoyl reductase and C-MeT of clz2 are not active in the final round of extension. The acetyltransferase clz6 appears to have a broad substrate selectivity for its acyl CoA substrate, allowing the in vitro synthesis of novel squalestatins. The biosynthesis of SQS1 requires several oxidative steps likely performed by oxidoreductases clz3, clz15 and clz16. Finally, in support of the identification of the cluster as being responsible for SQS1 production, the cluster contains a gene encoding a putative squalene synthase (SS) clz20, suggesting a likely mechanism for self-resistance. This chain is Probable carboxylesterase clz11, found in Cochliobolus lunatus (Filamentous fungus).